The chain runs to 354 residues: Coiled-coil domain-containing protein 86 (354 aa).

The segment at 1–354 (MDTPLRRSRR…QPPQRPATKV (354 aa)) is disordered. 2 positions are modified to phosphoserine: Ser18 and Ser24. Positions 31–44 (VLVEFESNPKETGE) are enriched in basic and acidic residues. A phosphoserine mark is found at Ser47 and Ser53. Over residues 49 to 58 (PGLGSPSRQP) the composition is skewed to low complexity. Thr60 carries the post-translational modification Phosphothreonine. Phosphoserine is present on residues Ser61, Ser64, Ser75, Ser86, Ser105, Ser108, Ser123, and Ser183. Over residues 97–107 (FPQNQPESSPE) the composition is skewed to polar residues. Basic and acidic residues predominate over residues 199 to 211 (PAREGPAPKKREG). Phosphoserine occurs at positions 212 and 213. The span at 232–248 (GKPKSGRVWKDRSKKRF) shows a compositional bias: basic residues. Composition is skewed to basic and acidic residues over residues 267–289 (DRQERKLAKDFARHLEEEKERRR) and 297–311 (AENLRRRLENERKAE). Residues 274–317 (AKDFARHLEEEKERRRQEKKKRRAENLRRRLENERKAEIVQVIR) are a coiled coil. Over residues 320–330 (AKLKRAKKKQL) the composition is skewed to basic residues. Arg336 carries the citrulline modification.

In terms of processing, citrullinated by PADI4.

Its subcellular location is the nucleus. The protein resides in the chromosome. It is found in the nucleolus. Its function is as follows. Required for proper chromosome segregation during mitosis and error-free mitotic progression. In Bos taurus (Bovine), this protein is Coiled-coil domain-containing protein 86.